The chain runs to 1288 residues: 5-oxoprolinase (1288 aa).

Residues Pro1248–Pro1270 form a disordered region. A compositionally biased stretch (pro residues) spans Pro1259 to Pro1270. Ser1265 carries the post-translational modification Phosphoserine.

This sequence belongs to the oxoprolinase family. As to quaternary structure, homodimer. As to expression, expressed in testis, kidney and liver.

It is found in the cytoplasm. The protein localises to the cytosol. It catalyses the reaction 5-oxo-L-proline + ATP + 2 H2O = L-glutamate + ADP + phosphate + H(+). Catalyzes the cleavage of 5-oxo-L-proline to form L-glutamate coupled to the hydrolysis of ATP to ADP and inorganic phosphate. This is 5-oxoprolinase (Oplah) from Rattus norvegicus (Rat).